We begin with the raw amino-acid sequence, 250 residues long: Small ribosomal subunit protein uS3 (250 aa).

In terms of domain architecture, KH type-2 spans isoleucine 39–lysine 111.

Belongs to the universal ribosomal protein uS3 family. Part of the 30S ribosomal subunit. Forms a tight complex with proteins S10 and S14.

Its function is as follows. Binds the lower part of the 30S subunit head. Binds mRNA in the 70S ribosome, positioning it for translation. This chain is Small ribosomal subunit protein uS3, found in Elm witches'-broom phytoplasma.